A 1050-amino-acid chain; its full sequence is Ankyrin repeat domain-containing protein 27 (1050 aa).

The sufficient for GEF activity towards RAB21 stretch occupies residues 1 to 372; it reads MALYDEDLLK…RQGSLSAKPP (372 aa). The VPS9 domain occupies 233 to 371; sequence ASEDAAFNKI…IRQGSLSAKP (139 aa). ANK repeat units lie at residues 396–426, 462–491, 495–524, 528–560, 564–593, and 597–627; these read SPTD…DKDT, RGHT…MVNA, HGAT…SAEV, NGNT…RLDI, KGDT…STEI, and LKET…RQKS. Positions 396 to 460 are sufficient for interaction with VPS29; the sequence is SPTDCLFKHI…PSVVTPFSRD (65 aa). The tract at residues 451–600 is interaction with RAB38; that stretch reads PSVVTPFSRD…TEIQNRLKET (150 aa). Residues 451-730 form an interaction with RAB32 region; that stretch reads PSVVTPFSRD…APAQKRLAKV (280 aa). The disordered stretch occupies residues 625–665; that stretch reads QKSSEAPVQSPQRSVDSISQESSTSSFSSMSASSRQEETKK. The span at 628–637 shows a compositional bias: polar residues; it reads SEAPVQSPQR. The span at 638–658 shows a compositional bias: low complexity; the sequence is SVDSISQESSTSSFSSMSASS. The segment at 658-707 is required for interaction with VAMP7; sequence SRQEETKKDYREVEKLLRAVADGDLEMVRYLLEWTEEDLEDAEDTVSAAD. 5 ANK repeats span residues 668 to 698, 743 to 772, 776 to 805, 809 to 838, and 842 to 871; these read REVE…DLED, DGSS…NAGA, DQAV…KPNK, SGNT…SINA, and KGNT…SVQV. The interval 692-746 is sufficient for interaction with VPS29; the sequence is TEEDLEDAEDTVSAADPEFCHPLCQCPKCAPAQKRLAKVPASGLGVNVTSQDGSS. Ser-962 and Ser-970 each carry phosphoserine. The tract at residues 987–1050 is disordered; it reads PAQSGSHAAE…TPQEVSASRS (64 aa). Over residues 994–1004 the composition is skewed to basic and acidic residues; the sequence is AAEKGNSDWPE. At Thr-1023 the chain carries Phosphothreonine. Residues 1040–1050 are compositionally biased toward polar residues; the sequence is STPQEVSASRS.

In terms of assembly, interacts with RAB21 (GDP-bound form), VPS29, RAB32 (GTP-bound form), RAB38 (GTP-bound form), VAMP7, KIF5A, KIF5C, GOLGA4. Interacts with low affinity with RAB5. ANKRD27:RAB32 heterodimers can homodimerize to form tetramers. Can interact with RAB38 or RAB32, VPS29 and VAMP7 simultaneously. A decreased interaction with RAB32 seen in the presence of SGSM2.

The protein localises to the early endosome. The protein resides in the late endosome. It localises to the cytoplasmic vesicle membrane. Its subcellular location is the lysosome. It is found in the cell membrane. The protein localises to the melanosome. In terms of biological role, may be a guanine exchange factor (GEF) for Rab21, Rab32 and Rab38 and regulate endosome dynamics. May regulate the participation of VAMP7 in membrane fusion events; in vitro inhibits VAMP7-mediated SNARE complex formation by trapping VAMP7 in a closed, fusogenically inactive conformation. Involved in peripheral melanosomal distribution of TYRP1 in melanocytes; the function, which probably is implicating vesicle-trafficking, includes cooperation with Rab32, Rab38 and VAMP7. Involved in the regulation of neurite growth; the function seems to require its GEF activity, probably towards Rab21, and VAMP7 but not Rab32/38. Proposed to be involved in Golgi sorting of VAMP7 and transport of VAMP7 vesicles to the cell surface; the function seems to implicate kinesin heavy chain isoform 5 proteins, GOLGA4, RAB21 and MACF1. Required for the colocalization of VAMP7 and Rab21, probably on TGN sites. Involved in GLUT1 endosome-to-plasma membrane trafficking; the function is dependent of association with VPS29. Regulates the proper trafficking of melanogenic enzymes TYR, TYRP1 and DCT/TYRP2 to melanosomes in melanocytes. This Homo sapiens (Human) protein is Ankyrin repeat domain-containing protein 27 (ANKRD27).